The chain runs to 180 residues: Adenine phosphoribosyltransferase (180 aa).

The residue at position 2 (Ser2) is an N-acetylserine. Phosphoserine occurs at positions 15 and 30. At Tyr60 the chain carries Phosphotyrosine. Ser66 is subject to Phosphoserine. An N6-acetyllysine modification is found at Lys114. Position 135 is a phosphothreonine (Thr135).

The protein belongs to the purine/pyrimidine phosphoribosyltransferase family. As to quaternary structure, homodimer.

It localises to the cytoplasm. The catalysed reaction is AMP + diphosphate = 5-phospho-alpha-D-ribose 1-diphosphate + adenine. The protein operates within purine metabolism; AMP biosynthesis via salvage pathway; AMP from adenine: step 1/1. Its function is as follows. Catalyzes a salvage reaction resulting in the formation of AMP, that is energically less costly than de novo synthesis. The polypeptide is Adenine phosphoribosyltransferase (Mus musculus (Mouse)).